A 664-amino-acid polypeptide reads, in one-letter code: MACRLYLALIFSCVYLICLSSQQETGFVYNGFEQADLFIDGIAKILPDGLLQLTNTTELQMGHAFFKKPFDFDPSSSLSFYTHFVCALVPPKLGADGGHGIVFVVSPSIDLSHAYATQYLGVFSNLTNGTSSSHLLAIELDTVKTVEFNELEKPHVGIDLNSPISVESALPSYFSNALGKNISINLLSGEPIQVWVDYDGSFLNVTLAPIEIKKPNQPLISRAINLSEIFQEKMYVGFSSSTGNLLSNHYILGWSFSRRKEQLQSLNLSTLPRVPLPKEEKKKLSPLLIGLVILLVIPVVMVLGGVYWYRRKKYAEVKEWWEKEYGPHRFSYKSLYKATNGFRKDCRVGKGGFGEVYKGTLPGGRHIAVKRLSHDAEQGMKQFVAEVVTMGNLQHRNLVPLLGYCRRKCELLLVSEYMPNGSLDQYLFHEGNPSPSWYQRISILKDIASALSYLHTGTKQVVLHRDIKASNVMLDSEFNGRLGDFGMAKFHDRGTNLSATAAVGTIGYMAPELITMGTSMKTDVYAFGAFLLEVICGRRPVEPELPVGKQYLVKWVYECWKEACLFKTRDPRLGVEFLPEEVEMVLKLGLLCTNAMPESRPAMEQVVQYLNQDLPLPIFSPSTPGIGAFMPVSMEALSAIGVSSVRNSSVSMFVTHTILDGHGR.

The signal sequence occupies residues 1–21 (MACRLYLALIFSCVYLICLSS). At 22–286 (QQETGFVYNG…PKEEKKKLSP (265 aa)) the chain is on the extracellular side. Positions 24–257 (ETGFVYNGFE…NHYILGWSFS (234 aa)) are legume-lectin like. Asn55, Asn125, Asn128, Asn181, Asn204, Asn225, and Asn267 each carry an N-linked (GlcNAc...) asparagine glycan. Residues 287 to 307 (LLIGLVILLVIPVVMVLGGVY) traverse the membrane as a helical segment. At 308-664 (WYRRKKYAEV…THTILDGHGR (357 aa)) the chain is on the cytoplasmic side. The Protein kinase domain maps to 342-619 (FRKDCRVGKG…LNQDLPLPIF (278 aa)). ATP contacts are provided by residues 348–356 (VGKGGFGEV) and Lys370. Catalysis depends on Asp466, which acts as the Proton acceptor.

The protein in the C-terminal section; belongs to the protein kinase superfamily. Ser/Thr protein kinase family. It in the N-terminal section; belongs to the leguminous lectin family. Post-translationally, autophosphorylated on Ser and Thr residues. In terms of tissue distribution, mostly expressed in roots and flowers, and, to a lower extent, in leaves.

It is found in the cell membrane. The enzyme catalyses L-seryl-[protein] + ATP = O-phospho-L-seryl-[protein] + ADP + H(+). It carries out the reaction L-threonyl-[protein] + ATP = O-phospho-L-threonyl-[protein] + ADP + H(+). Its function is as follows. Involved in resistance response to the pathogenic fungus Alternaria brassicicola. In Arabidopsis thaliana (Mouse-ear cress), this protein is L-type lectin-domain containing receptor kinase I.3.